The following is a 316-amino-acid chain: Ribosomal RNA small subunit methyltransferase H (316 aa).

S-adenosyl-L-methionine is bound by residues 35–37, Asp55, Phe80, Asp102, and Gln109; that span reads GGH.

The protein belongs to the methyltransferase superfamily. RsmH family.

Its subcellular location is the cytoplasm. It catalyses the reaction cytidine(1402) in 16S rRNA + S-adenosyl-L-methionine = N(4)-methylcytidine(1402) in 16S rRNA + S-adenosyl-L-homocysteine + H(+). Specifically methylates the N4 position of cytidine in position 1402 (C1402) of 16S rRNA. This is Ribosomal RNA small subunit methyltransferase H from Colwellia psychrerythraea (strain 34H / ATCC BAA-681) (Vibrio psychroerythus).